The following is a 955-amino-acid chain: 2-oxoglutarate dehydrogenase E1 component (955 aa).

This sequence belongs to the alpha-ketoglutarate dehydrogenase family. Homodimer. Part of the 2-oxoglutarate dehydrogenase (OGDH) complex composed of E1 (2-oxoglutarate dehydrogenase), E2 (dihydrolipoamide succinyltransferase) and E3 (dihydrolipoamide dehydrogenase); the complex contains multiple copies of the three enzymatic components (E1, E2 and E3). Thiamine diphosphate is required as a cofactor.

The enzyme catalyses N(6)-[(R)-lipoyl]-L-lysyl-[protein] + 2-oxoglutarate + H(+) = N(6)-[(R)-S(8)-succinyldihydrolipoyl]-L-lysyl-[protein] + CO2. Functionally, E1 component of the 2-oxoglutarate dehydrogenase (OGDH) complex which catalyzes the decarboxylation of 2-oxoglutarate, the first step in the conversion of 2-oxoglutarate to succinyl-CoA and CO(2). The sequence is that of 2-oxoglutarate dehydrogenase E1 component from Bacillus cereus (strain ZK / E33L).